The chain runs to 109 residues: Flowering-promoting factor 1-like protein 1 (109 aa).

The short motif at 73–81 (RGSLDLISL) is the D-box element.

Belongs to the FPF1 family. Interacts with RPT4. In terms of processing, ubiquitinated. RPT4 mediates its proteasome-dependent degradation. Specifically expressed in the apical meristem, the elongation zone of root tip, steles of the branch zone, and the young lateral root. Also expressed in spikes. Expressed in roots and spikes (at protein level).

It is found in the cytoplasm. It localises to the nucleus. Its function is as follows. GTP-binding protein that functions in the development of root systems, which are mediated by auxin. Acts as a cell cycle regulator during root development. Proteasome-mediated degradation of the protein is necessary for the transition of metaphase to anaphase in mitosis. The polypeptide is Flowering-promoting factor 1-like protein 1 (RAA1) (Oryza sativa subsp. japonica (Rice)).